Reading from the N-terminus, the 127-residue chain is Flagellar hook-basal body complex protein FliE (127 aa).

Belongs to the FliE family.

It localises to the bacterial flagellum basal body. The chain is Flagellar hook-basal body complex protein FliE from Leptospira interrogans serogroup Icterohaemorrhagiae serovar copenhageni (strain Fiocruz L1-130).